A 179-amino-acid polypeptide reads, in one-letter code: Large ribosomal subunit protein uL5 (179 aa).

Belongs to the universal ribosomal protein uL5 family. As to quaternary structure, part of the 50S ribosomal subunit; part of the 5S rRNA/L5/L18/L25 subcomplex. Contacts the 5S rRNA and the P site tRNA. Forms a bridge to the 30S subunit in the 70S ribosome.

This is one of the proteins that bind and probably mediate the attachment of the 5S RNA into the large ribosomal subunit, where it forms part of the central protuberance. In the 70S ribosome it contacts protein S13 of the 30S subunit (bridge B1b), connecting the 2 subunits; this bridge is implicated in subunit movement. Contacts the P site tRNA; the 5S rRNA and some of its associated proteins might help stabilize positioning of ribosome-bound tRNAs. The polypeptide is Large ribosomal subunit protein uL5 (Nitrosomonas eutropha (strain DSM 101675 / C91 / Nm57)).